Reading from the N-terminus, the 251-residue chain is 3-deoxy-manno-octulosonate cytidylyltransferase (251 aa).

The protein belongs to the KdsB family.

It localises to the cytoplasm. It carries out the reaction 3-deoxy-alpha-D-manno-oct-2-ulosonate + CTP = CMP-3-deoxy-beta-D-manno-octulosonate + diphosphate. Its pathway is nucleotide-sugar biosynthesis; CMP-3-deoxy-D-manno-octulosonate biosynthesis; CMP-3-deoxy-D-manno-octulosonate from 3-deoxy-D-manno-octulosonate and CTP: step 1/1. It participates in bacterial outer membrane biogenesis; lipopolysaccharide biosynthesis. Activates KDO (a required 8-carbon sugar) for incorporation into bacterial lipopolysaccharide in Gram-negative bacteria. The sequence is that of 3-deoxy-manno-octulosonate cytidylyltransferase from Rhizobium etli (strain ATCC 51251 / DSM 11541 / JCM 21823 / NBRC 15573 / CFN 42).